The chain runs to 617 residues: Vacuolar protein sorting-associated protein 33B (617 aa).

Belongs to the STXBP/unc-18/SEC1 family. In terms of assembly, interacts with vipas39. In terms of tissue distribution, widely expressed from 4 hours post-fertilization (hpf) to 24 hpf. At 48 hpf, localized to brain, retina, ear, liver and proximal intestine. This expression pattern is more pronounced at 72 hpf and persists through 5 days post-fertilization (dpf). At 3 dpf and 4 dpf, expression in the liver is predominantly in developing biliary epithelial cells. No expression detected in kidney or spinal cord.

Its subcellular location is the late endosome membrane. The protein resides in the lysosome membrane. Its function is as follows. May play a role in vesicle-mediated protein trafficking to lysosomal compartments and in membrane docking/fusion reactions of late endosomes/lysosomes. Required for proper trafficking and targeting of the collagen-modifying enzyme lysyl hydroxylase 3 (LH3) to intracellular collagen. Mediates phagolysosomal fusion in macrophages. Proposed to be involved in endosomal maturation implicating vipas39. In epithelial cells, the vps33b:vipas39 complex may play a role in the apical recycling pathway and in the maintenance of the apical-basolateral polarity. Plays a role in bile duct development. The sequence is that of Vacuolar protein sorting-associated protein 33B from Danio rerio (Zebrafish).